The following is a 146-amino-acid chain: Wheatwin-1 (146 aa).

Positions 1-21 (MAARPMLVVALLCAAAAAATA) are cleaved as a signal peptide. Gln22 is subject to Pyrrolidone carboxylic acid. The 125-residue stretch at 22 to 146 (QQATNVRATY…VNYQFVDCRD (125 aa)) folds into the Barwin domain. Disulfide bonds link Cys52/Cys84, Cys73/Cys107, and Cys87/Cys144.

In terms of assembly, monomer.

Its activity is regulated as follows. Inhibited by 5'-ADP. Functionally, shows antifungal activity towards B.cinerea and towards the wheat-specific pathogenic fungi F.culmorum and F.graminearum (groups 1 and 2). Has ribonuclease activity. In Triticum aestivum (Wheat), this protein is Wheatwin-1 (PR4A).